The chain runs to 195 residues: Putative inactive carbonic anhydrase 5B-like protein (195 aa).

A substrate-binding site is contributed by 121–122; the sequence is TT.

The protein belongs to the alpha-carbonic anhydrase family.

This Homo sapiens (Human) protein is Putative inactive carbonic anhydrase 5B-like protein (CA5BP1).